A 156-amino-acid polypeptide reads, in one-letter code: ATP synthase subunit b (156 aa).

A helical transmembrane segment spans residues Leu-7–Trp-26.

This sequence belongs to the ATPase B chain family. As to quaternary structure, F-type ATPases have 2 components, F(1) - the catalytic core - and F(0) - the membrane proton channel. F(1) has five subunits: alpha(3), beta(3), gamma(1), delta(1), epsilon(1). F(0) has three main subunits: a(1), b(2) and c(10-14). The alpha and beta chains form an alternating ring which encloses part of the gamma chain. F(1) is attached to F(0) by a central stalk formed by the gamma and epsilon chains, while a peripheral stalk is formed by the delta and b chains.

It is found in the cell inner membrane. In terms of biological role, f(1)F(0) ATP synthase produces ATP from ADP in the presence of a proton or sodium gradient. F-type ATPases consist of two structural domains, F(1) containing the extramembraneous catalytic core and F(0) containing the membrane proton channel, linked together by a central stalk and a peripheral stalk. During catalysis, ATP synthesis in the catalytic domain of F(1) is coupled via a rotary mechanism of the central stalk subunits to proton translocation. Functionally, component of the F(0) channel, it forms part of the peripheral stalk, linking F(1) to F(0). This Dechloromonas aromatica (strain RCB) protein is ATP synthase subunit b.